The sequence spans 388 residues: Probable E3 ubiquitin-protein ligase LOG2 (388 aa).

Positions 1-43 (MGNISSSGGEGRRRRRRNHTAAPPPPPPPPSSSLPPPPLPTEI) are disordered. Gly2 is lipidated: N-myristoyl glycine. Pro residues predominate over residues 22-40 (APPPPPPPPSSSLPPPPLP). The interval 159 to 281 (FTFDATVSGR…GEIKIRVVKQ (123 aa)) is DAR2 domain. The segment at 319-358 (CVICLSEPRDTTVLPCRHMCMCSGCAKVLRFQTNRCPICR) adopts an RING-type; atypical zinc-finger fold. The tract at residues 368-388 (KVHGNNGSGNNTGQGETVEQE) is disordered.

The protein belongs to the RING-type zinc finger family. LOG2 subfamily. As to quaternary structure, interacts with GDU1. In terms of processing, myristoylated (in vitro). Expressed in the vascular tissues in both phloem and xylem parenchyma cells.

It is found in the cell membrane. It carries out the reaction S-ubiquitinyl-[E2 ubiquitin-conjugating enzyme]-L-cysteine + [acceptor protein]-L-lysine = [E2 ubiquitin-conjugating enzyme]-L-cysteine + N(6)-ubiquitinyl-[acceptor protein]-L-lysine.. Its pathway is protein modification; protein ubiquitination. In terms of biological role, acts as an E3 ubiquitin-protein ligase, or as part of E3 complex, which accepts ubiquitin from specific E2 ubiquitin-conjugating enzymes and then transfers it to substrates (in vitro). Required for GLUTAMINE DUMPER 1(GDU1)-induced amino acid secretion and for amino acid homeostasis. Ubiquitinates GDU1 (in vitro). The protein is Probable E3 ubiquitin-protein ligase LOG2 (LOG2) of Arabidopsis thaliana (Mouse-ear cress).